The sequence spans 438 residues: Drainin (438 aa).

Residues 54 to 104 (PKSQEEVLKHQREYEEIQRKAKKTLEREAKEKEKLDAIRKEKERSLIDARK) are a coiled coil. The Rab-GAP TBC domain maps to 133-374 (GLPPAVRGKI…RIWDLVFIEG (242 aa)).

The protein localises to the contractile vacuole membrane. It localises to the cytoplasm. Functionally, may act as a GTPase-activating protein for Rab family protein(s). Required for osmotic regulation by the contractile vacuole in hypo-osmotic environments. Essential for periodic fusion of the contractile vacuole with the plasma membrane and consequent expulsion of water from the cell body. This Dictyostelium discoideum (Social amoeba) protein is Drainin (phgA).